The sequence spans 3779 residues: Protein DDB_G0268328 (3779 aa).

Disordered stretches follow at residues 24 to 56 (RQIKSQNKLQNKSQNNGNNNNNKDNNNINKDGS), 1001 to 1028 (HEDEEEEGDGDNSNNSNSQDSDGDDDDD), 1137 to 1165 (QDSTLPKRKQHGYYHQQQQQQQYHQQQQQ), 1513 to 1538 (PTNSIYNNNNNNNNNNNNTNSSSLLS), 1656 to 1690 (ETTVLEKETKETKDNNLENNNNNTNNSNNNNNNKE), 2027 to 2054 (SNSSNNNNNNNDGSTTSTTTLNRSDSNN), 2144 to 2184 (NNNN…NNSS), 2280 to 2325 (ISTT…NEQQ), 2508 to 2527 (QINNNNNNNEKEEEEEREEG), 2720 to 2748 (DGNNNNNNNNNQNNNNQNNNNNQNNNDSS), 2975 to 3030 (ESND…DSIK), and 3427 to 3450 (QSNTLNGTGGGGGNGGGNNGSGKL). Composition is skewed to low complexity over residues 26–56 (IKSQNKLQNKSQNNGNNNNNKDNNNINKDGS), 1011–1020 (DNSNNSNSQD), 1149–1165 (YYHQQQQQQQYHQQQQQ), and 1515–1538 (NSIYNNNNNNNNNNNNTNSSSLLS). Residues 1656–1671 (ETTVLEKETKETKDNN) show a composition bias toward basic and acidic residues. Over residues 1672–1687 (LENNNNNTNNSNNNNN) the composition is skewed to low complexity. Low complexity-rich tracts occupy residues 2144-2182 (NNNNNNNNNNNNNNNNNNNNNNNNNNNNNNNNNNNNNNN) and 2285-2322 (NNNNNNNNNNNNNNNNNNNNNNNNNNNNNNNNNNNNNN). Composition is skewed to low complexity over residues 2722 to 2745 (NNNNNNNNNQNNNNQNNNNNQNNN) and 3015 to 3030 (SVNNNNNNNSNSDSIK). Positions 3433-3446 (GTGGGGGNGGGNNG) are enriched in gly residues.

The protein is Protein DDB_G0268328 of Dictyostelium discoideum (Social amoeba).